A 966-amino-acid chain; its full sequence is Protein STICHEL-like 4 (966 aa).

2 disordered regions span residues 64 to 118 (RSLR…DRSS) and 200 to 237 (RDNA…REQN). Over residues 75-84 (LKEDHQDSRE) the composition is skewed to basic and acidic residues. Residues 98-108 (PIVSFGTSKVT) show a composition bias toward polar residues. Positions 109–118 (PSDEKFDRSS) are enriched in basic and acidic residues. Positions 208 to 217 (SEMSIASNSV) are enriched in polar residues. Basic and acidic residues predominate over residues 219 to 236 (RGEKYEGEEGGGGRDREQ). Position 384–391 (384–391 (GPNGTGKT)) interacts with ATP. Residues cysteine 403, cysteine 412, cysteine 415, and cysteine 418 each contribute to the Zn(2+) site. Residues 650–678 (SKEDMEKLKQALKTLSESEKQLRVSNDKL) adopt a coiled-coil conformation. Over residues 706-717 (FNHTPLTDSDPS) the composition is skewed to polar residues. The disordered stretch occupies residues 706–733 (FNHTPLTDSDPSNHVVAGTRRDDSKQGF).

This sequence belongs to the DnaX/STICHEL family.

In Arabidopsis thaliana (Mouse-ear cress), this protein is Protein STICHEL-like 4.